We begin with the raw amino-acid sequence, 205 residues long: Thiamine-phosphate synthase (205 aa).

4-amino-2-methyl-5-(diphosphooxymethyl)pyrimidine-binding positions include 37 to 41 and N69; that span reads QVREK. Residues D70 and D89 each contribute to the Mg(2+) site. S108 is a 4-amino-2-methyl-5-(diphosphooxymethyl)pyrimidine binding site. 134-136 lines the 2-[(2R,5Z)-2-carboxy-4-methylthiazol-5(2H)-ylidene]ethyl phosphate pocket; that stretch reads TGS. K137 is a binding site for 4-amino-2-methyl-5-(diphosphooxymethyl)pyrimidine. 2-[(2R,5Z)-2-carboxy-4-methylthiazol-5(2H)-ylidene]ethyl phosphate contacts are provided by residues G165 and 185 to 186; that span reads IS.

Belongs to the thiamine-phosphate synthase family. It depends on Mg(2+) as a cofactor.

The catalysed reaction is 2-[(2R,5Z)-2-carboxy-4-methylthiazol-5(2H)-ylidene]ethyl phosphate + 4-amino-2-methyl-5-(diphosphooxymethyl)pyrimidine + 2 H(+) = thiamine phosphate + CO2 + diphosphate. The enzyme catalyses 2-(2-carboxy-4-methylthiazol-5-yl)ethyl phosphate + 4-amino-2-methyl-5-(diphosphooxymethyl)pyrimidine + 2 H(+) = thiamine phosphate + CO2 + diphosphate. It carries out the reaction 4-methyl-5-(2-phosphooxyethyl)-thiazole + 4-amino-2-methyl-5-(diphosphooxymethyl)pyrimidine + H(+) = thiamine phosphate + diphosphate. Its pathway is cofactor biosynthesis; thiamine diphosphate biosynthesis; thiamine phosphate from 4-amino-2-methyl-5-diphosphomethylpyrimidine and 4-methyl-5-(2-phosphoethyl)-thiazole: step 1/1. Its function is as follows. Condenses 4-methyl-5-(beta-hydroxyethyl)thiazole monophosphate (THZ-P) and 2-methyl-4-amino-5-hydroxymethyl pyrimidine pyrophosphate (HMP-PP) to form thiamine monophosphate (TMP). This chain is Thiamine-phosphate synthase, found in Clostridium botulinum (strain Langeland / NCTC 10281 / Type F).